The sequence spans 386 residues: Succinate--CoA ligase [ADP-forming] subunit beta (386 aa).

The region spanning 9–244 is the ATP-grasp domain; sequence KDLLTSYAIP…PSQENVRDVL (236 aa). ATP-binding positions include Lys46, 53-55, Val102, and Glu107; that span reads GRG. Asn199 and Asp213 together coordinate Mg(2+). Residues Asn264 and 321 to 323 each bind substrate; that span reads GIM.

It belongs to the succinate/malate CoA ligase beta subunit family. As to quaternary structure, heterotetramer of two alpha and two beta subunits. Requires Mg(2+) as cofactor.

The enzyme catalyses succinate + ATP + CoA = succinyl-CoA + ADP + phosphate. It carries out the reaction GTP + succinate + CoA = succinyl-CoA + GDP + phosphate. Its pathway is carbohydrate metabolism; tricarboxylic acid cycle; succinate from succinyl-CoA (ligase route): step 1/1. Succinyl-CoA synthetase functions in the citric acid cycle (TCA), coupling the hydrolysis of succinyl-CoA to the synthesis of either ATP or GTP and thus represents the only step of substrate-level phosphorylation in the TCA. The beta subunit provides nucleotide specificity of the enzyme and binds the substrate succinate, while the binding sites for coenzyme A and phosphate are found in the alpha subunit. The sequence is that of Succinate--CoA ligase [ADP-forming] subunit beta from Chlamydia abortus (strain DSM 27085 / S26/3) (Chlamydophila abortus).